The chain runs to 134 residues: Holo-[acyl-carrier-protein] synthase (134 aa).

The Mg(2+) site is built by Asp8 and Glu57.

It belongs to the P-Pant transferase superfamily. AcpS family. Mg(2+) serves as cofactor.

It localises to the cytoplasm. The catalysed reaction is apo-[ACP] + CoA = holo-[ACP] + adenosine 3',5'-bisphosphate + H(+). In terms of biological role, transfers the 4'-phosphopantetheine moiety from coenzyme A to a Ser of acyl-carrier-protein. The protein is Holo-[acyl-carrier-protein] synthase of Rhizobium rhizogenes (strain K84 / ATCC BAA-868) (Agrobacterium radiobacter).